Here is a 762-residue protein sequence, read N- to C-terminus: LON peptidase N-terminal domain and RING finger protein 1 (762 aa).

The tract at residues 1 to 35 (MSSPAVARASPGGNREASGGPRSRNGPWEVGGGGE) is disordered. A TPR 1 repeat occupies 47–80 (WELLLRRGELLALGGHLKGALEAFAAALRRGAPA). The RING-type 1 zinc finger occupies 118–154 (CLSCRGFLSEPVTVPCGHSYCRRCLRRELRARCRLCR). TPR repeat units follow at residues 201 to 233 (ARAAGRLGELLHEGRYREALAAACDALRAEPSD), 235 to 267 (TLKIYRAESYAGLQEFKAALEDLNAVLFQLPNW), and 268 to 301 (PEVYFRKGKVLQDAGFLGDALQLFLQCLALDEDF). At serine 420 the chain carries Phosphoserine. An RING-type 2 zinc finger spans residues 468–506 (CSLCMRLFFEPVTTPCGHSFCKNCLERCLDHAPYCPLCK). Residues 547–757 (TAELSHLTKN…KIQHILTYFS (211 aa)) enclose the Lon N-terminal domain.

This is LON peptidase N-terminal domain and RING finger protein 1 (Lonrf1) from Mus musculus (Mouse).